Reading from the N-terminus, the 448-residue chain is O-Mevalon transferase yanI (448 aa).

An N-linked (GlcNAc...) asparagine glycan is attached at Asn-2. 8 helical membrane-spanning segments follow: residues 21 to 41 (VLLSHSLASTHYTVLAFLLAV), 54 to 74 (YGLLLLQITCALQAFVAPPPP), 79 to 96 (AVLYTSGVLMANLLARYF), 165 to 185 (FVTAQLLTIIAMYAGLYLVEV), 217 to 237 (LIVLGLALVVYSHFALFVLPL), 316 to 336 (MLMLITFVISGLIHTSGSYHV), 350 to 370 (VKYFISQAISIMIEDFGCWLL), and 390 to 410 (IVTAGWYFWSRVHWSVMPVAL).

Belongs to the wax synthase family.

The protein localises to the membrane. The protein operates within secondary metabolite biosynthesis; terpenoid biosynthesis. O-Mevalon transferase yanI; part of the gene cluster that mediates the biosynthesis of yanuthone D, a fungal isoprenoid epoxycyclohexenone that acts as an antibiotic against fungi and bacteria. The first step of the pathway is the synthesis of 6-methylsalicylic acid (6-MSA) by the polyketide synthase yanA. 6-MSA is then converted to m-cresol by the decarboxylase yanB. The cytochrome P450 monooxygenase yanC then catalyzes the oxidation of m-cresol to toluquinol. Epoxidation of toluquinol is then performed by the short chain dehydrogenase yanD, with the help of yanE, and a further prenylation by yanG leads to 7-deacetoxyyanuthone A. The next step is the hydroxylation of C-22 of 7-deacetoxyyanuthone A by the cytochrome P450 monooxygenase yanH to yield 22-deacetylyanuthone A. O-Mevalon transferase yanI then attaches mevalon to the hydroxyl group of 22-deacetylyanuthone A to produce yanuthone E. Finally, the FAD-dependent monooxygenase yanF oxidizes the hydroxyl group at C15 of yanuthone E to form yanuthone D. Furthermore, several branching points in the pathway lead to the production of yanuthones F and G from 7-deacetoxyyanuthone A; yanuthones H and I from 22-deacetylyanuthone A; and yanuthone J from yanuthone E. This is O-Mevalon transferase yanI from Aspergillus niger (strain ATCC 1015 / CBS 113.46 / FGSC A1144 / LSHB Ac4 / NCTC 3858a / NRRL 328 / USDA 3528.7).